We begin with the raw amino-acid sequence, 486 residues long: Aspartyl/glutamyl-tRNA(Asn/Gln) amidotransferase subunit B (486 aa).

This sequence belongs to the GatB/GatE family. GatB subfamily. In terms of assembly, heterotrimer of A, B and C subunits.

It catalyses the reaction L-glutamyl-tRNA(Gln) + L-glutamine + ATP + H2O = L-glutaminyl-tRNA(Gln) + L-glutamate + ADP + phosphate + H(+). The enzyme catalyses L-aspartyl-tRNA(Asn) + L-glutamine + ATP + H2O = L-asparaginyl-tRNA(Asn) + L-glutamate + ADP + phosphate + 2 H(+). Its function is as follows. Allows the formation of correctly charged Asn-tRNA(Asn) or Gln-tRNA(Gln) through the transamidation of misacylated Asp-tRNA(Asn) or Glu-tRNA(Gln) in organisms which lack either or both of asparaginyl-tRNA or glutaminyl-tRNA synthetases. The reaction takes place in the presence of glutamine and ATP through an activated phospho-Asp-tRNA(Asn) or phospho-Glu-tRNA(Gln). The protein is Aspartyl/glutamyl-tRNA(Asn/Gln) amidotransferase subunit B of Herminiimonas arsenicoxydans.